The sequence spans 244 residues: Small ribosomal subunit protein eS4 (244 aa).

Residues 43-106 (LPLLLVVRDV…DETYLVLFDE (64 aa)) enclose the S4 RNA-binding domain.

It belongs to the eukaryotic ribosomal protein eS4 family.

The sequence is that of Small ribosomal subunit protein eS4 from Methanococcus maripaludis (strain DSM 14266 / JCM 13030 / NBRC 101832 / S2 / LL).